Here is a 128-residue protein sequence, read N- to C-terminus: MKTFIKGLGQVALLFLFARFMNLIVEVLHINIPGSILGIIVIFALLHFKIIKLEWIEIGALWLLAELLLFFVPSAVGIMNYGDILAEFGTSIILVVLISTFVVMVSTGMLTQLIAKRKERKKTCSSDA.

3 helical membrane passes run 23–43, 58–78, and 84–104; these read LIVE…IVIF, IGAL…AVGI, and ILAE…FVVM.

The protein belongs to the CidA/LrgA family. CidA subfamily.

The protein localises to the cell membrane. Functionally, increases the activity of extracellular murein hydrolases possibly by mediating their export via hole formation. Inhibited by the antiholin-like proteins LrgAB. In an unstressed cell, the LrgAB products probably inhibit the function of the CidA protein. When a cell is stressed by the addition of antibiotics or by other factors in the environment, CidA possibly oligomerizes within the bacterial cell membrane, creating lesions that disrupt the proton motive force, which in turn results in loss of cell viability. These lesions are also hypothesized to regulate the subsequent cell lysis by either allowing the murein hydrolases access to the cell wall substrate and/or regulating their activity by a possible change in the cell wall pH that results from loss of membrane potential. This chain is Holin-like protein CidA, found in Bacillus licheniformis (strain ATCC 14580 / DSM 13 / JCM 2505 / CCUG 7422 / NBRC 12200 / NCIMB 9375 / NCTC 10341 / NRRL NRS-1264 / Gibson 46).